The primary structure comprises 787 residues: Protein FAM149A (787 aa).

7 disordered regions span residues 22–105 (SPAV…SSGA), 144–175 (GSNSVTASSPRNPRQLRAPGEREPSVWMAPGP), 189–226 (EEWTSDSDSQDDPEGRGLSEGLRKQSSEKSKDPLPTNF), 238–284 (ASES…SWRD), 432–455 (DGDEHLGQSPALRGRKRHRHGLPP), 573–602 (LQQRPTYSADRTQNDQDDKLPGGGVGASSR), and 665–697 (AVQTSRSRLPPIGSETGEPNTAASGSRPVSYRG). Residues 37-46 (SVDSGASTSL) are compositionally biased toward polar residues. Low complexity-rich tracts occupy residues 51-65 (TLTLLPSLPPDTAAS) and 96-105 (SGSLPSSSGA). Over residues 144–155 (GSNSVTASSPRN) the composition is skewed to polar residues. The span at 189 to 200 (EEWTSDSDSQDD) shows a compositional bias: acidic residues. Positions 201–220 (PEGRGLSEGLRKQSSEKSKD) are enriched in basic and acidic residues. Residues 239-250 (SESPSSFSSSGS) show a composition bias toward low complexity. Polar residues predominate over residues 251-261 (RTPTEAHNSWP). Positions 262–274 (GSSTQSSTTGLST) are enriched in low complexity.

The protein belongs to the FAM149 family.

The chain is Protein FAM149A (Fam149a) from Mus musculus (Mouse).